Reading from the N-terminus, the 375-residue chain is Fructose-1,6-bisphosphate aldolase/phosphatase (375 aa).

The active-site Proton acceptor; for FBP phosphatase activity is Asp15. Mg(2+)-binding residues include Asp15, His22, Asp56, and Asp57. His22 lines the beta-D-fructose 1,6-bisphosphate pocket. His22 is a dihydroxyacetone phosphate binding site. Tyr94 serves as a coordination point for beta-D-fructose 1,6-bisphosphate. Gln98 is a binding site for Mg(2+). Residue 107–108 coordinates beta-D-fructose 1,6-bisphosphate; it reads GN. Asp135 lines the Mg(2+) pocket. Lys136 serves as a coordination point for beta-D-fructose 1,6-bisphosphate. Lys136 contacts dihydroxyacetone phosphate. The active-site Proton donor/acceptor; for FBP aldolase activity is Tyr237. Mg(2+) contacts are provided by Lys240, Asp241, and Asp242. Lys240 functions as the Schiff-base intermediate with DHAP; for FBP aldolase activity in the catalytic mechanism. Residues 250–251, Arg274, Asp295, and Tyr357 each bind beta-D-fructose 1,6-bisphosphate; that span reads QS. Arg274 and Asp295 together coordinate dihydroxyacetone phosphate.

Belongs to the FBP aldolase/phosphatase family. In terms of assembly, homooctamer; dimer of tetramers. The cofactor is Mg(2+).

The catalysed reaction is beta-D-fructose 1,6-bisphosphate = D-glyceraldehyde 3-phosphate + dihydroxyacetone phosphate. It catalyses the reaction beta-D-fructose 1,6-bisphosphate + H2O = beta-D-fructose 6-phosphate + phosphate. Its pathway is carbohydrate biosynthesis; gluconeogenesis. Its activity is regulated as follows. FBPase activity is inhibited by Ca(2+), ATP, ADP and phosphoenolpyruvate. Functionally, catalyzes two subsequent steps in gluconeogenesis: the aldol condensation of dihydroxyacetone phosphate (DHAP) and glyceraldehyde-3-phosphate (GA3P) to fructose-1,6-bisphosphate (FBP), and the dephosphorylation of FBP to fructose-6-phosphate (F6P). Can also dephosphorylate, with lower activity, other related substrates including fructose-1-phosphate, fructose-6-phosphate, glucose-1-phosphate, glucose-6-phosphate, glycerol-2-phosphate, phosphoenolpyruvate, 5'-AMP, 6'-ADP and 7'-ATP. This chain is Fructose-1,6-bisphosphate aldolase/phosphatase, found in Thermococcus onnurineus (strain NA1).